The following is a 347-amino-acid chain: Lipoyl synthase (347 aa).

Residues Cys77, Cys82, Cys88, Cys103, Cys107, Cys110, and Ser317 each coordinate [4Fe-4S] cluster. The region spanning 89-306 (FADGTATFMI…MDYGKKIGFF (218 aa)) is the Radical SAM core domain.

Belongs to the radical SAM superfamily. Lipoyl synthase family. [4Fe-4S] cluster is required as a cofactor.

Its subcellular location is the cytoplasm. It carries out the reaction [[Fe-S] cluster scaffold protein carrying a second [4Fe-4S](2+) cluster] + N(6)-octanoyl-L-lysyl-[protein] + 2 oxidized [2Fe-2S]-[ferredoxin] + 2 S-adenosyl-L-methionine + 4 H(+) = [[Fe-S] cluster scaffold protein] + N(6)-[(R)-dihydrolipoyl]-L-lysyl-[protein] + 4 Fe(3+) + 2 hydrogen sulfide + 2 5'-deoxyadenosine + 2 L-methionine + 2 reduced [2Fe-2S]-[ferredoxin]. The protein operates within protein modification; protein lipoylation via endogenous pathway; protein N(6)-(lipoyl)lysine from octanoyl-[acyl-carrier-protein]: step 2/2. Catalyzes the radical-mediated insertion of two sulfur atoms into the C-6 and C-8 positions of the octanoyl moiety bound to the lipoyl domains of lipoate-dependent enzymes, thereby converting the octanoylated domains into lipoylated derivatives. The polypeptide is Lipoyl synthase (Psychrobacter cryohalolentis (strain ATCC BAA-1226 / DSM 17306 / VKM B-2378 / K5)).